The chain runs to 377 residues: MVRQSIGLIALQLLNLVSVAQAATDAKRDLSEKPKMPYDPNTAADCTWWIDNDGSKNCEDIPEYWDIEMVDWLMWNPSLTLDCGNFLKGRSYCVEAKSVLPTQTSSSTATTTSQKPTATVSPLPQQDGLTKDCTKYYNVQSGDTCQKIVDQYMTFSLAEFNKWNPAVGPDCRSLFVGYYVCVGVPGTPTKPIGPSPTQPGIPKSCNKYYKADRGETCQGIADKHRLKLNDFYKWNPSVTNDCVGLWQGYYYCVGITPAFELKAFYHADCTGKLHGQTTIASGSDGACFDTNCQVASIDTFIVGDCPNGQVQISYWEQPGCTGKWFGYGYSSRGTCRKLWTEGWKFKAVHLRCASEKDDCVSKRTCTYDPEPSRGICM.

A signal peptide spans 1-22; it reads MVRQSIGLIALQLLNLVSVAQA. Residues 104–119 are compositionally biased toward low complexity; that stretch reads TSSSTATTTSQKPTAT. Residues 104-124 form a disordered region; the sequence is TSSSTATTTSQKPTATVSPLP. LysM domains are found at residues 135–182 and 207–253; these read KYYN…YVCV and KYYK…YYCV.

This sequence belongs to the secreted LysM effector family.

Its function is as follows. Might have a role in sequestration of chitin oligosaccharides (breakdown products of fungal cell walls that are released during invasion and act as triggers of host immunity) to dampen host defense. The protein is Secreted LysM effector Lys2 of Pochonia chlamydosporia (strain 123) (Metacordyceps chlamydosporia).